Here is a 319-residue protein sequence, read N- to C-terminus: Beta-ketoacyl-[acyl-carrier-protein] synthase III (319 aa).

Residues Cys114 and His246 contribute to the active site. Positions 247-251 are ACP-binding; it reads QANIR. Asn276 is a catalytic residue.

It belongs to the thiolase-like superfamily. FabH family. Homodimer.

It is found in the cytoplasm. It catalyses the reaction malonyl-[ACP] + acetyl-CoA + H(+) = 3-oxobutanoyl-[ACP] + CO2 + CoA. The protein operates within lipid metabolism; fatty acid biosynthesis. In terms of biological role, catalyzes the condensation reaction of fatty acid synthesis by the addition to an acyl acceptor of two carbons from malonyl-ACP. Catalyzes the first condensation reaction which initiates fatty acid synthesis and may therefore play a role in governing the total rate of fatty acid production. Possesses both acetoacetyl-ACP synthase and acetyl transacylase activities. Its substrate specificity determines the biosynthesis of branched-chain and/or straight-chain of fatty acids. The chain is Beta-ketoacyl-[acyl-carrier-protein] synthase III from Thiobacillus denitrificans (strain ATCC 25259 / T1).